The sequence spans 114 residues: Large ribosomal subunit protein bL19 (114 aa).

It belongs to the bacterial ribosomal protein bL19 family.

In terms of biological role, this protein is located at the 30S-50S ribosomal subunit interface and may play a role in the structure and function of the aminoacyl-tRNA binding site. This chain is Large ribosomal subunit protein bL19, found in Thermoanaerobacter sp. (strain X514).